A 270-amino-acid chain; its full sequence is FKBP-type peptidyl-prolyl cis-trans isomerase FkpA (270 aa).

The first 25 residues, 1 to 25, serve as a signal peptide directing secretion; the sequence is MKSLFKVTLLATTMAVALHAPITFA. A PPIase FKBP-type domain is found at 164-249; that stretch reads SDTVVVNYKG…VFDVELLDVK (86 aa).

This sequence belongs to the FKBP-type PPIase family.

It localises to the periplasm. It carries out the reaction [protein]-peptidylproline (omega=180) = [protein]-peptidylproline (omega=0). PPIases accelerate the folding of proteins. It catalyzes the cis-trans isomerization of proline imidic peptide bonds in oligopeptides. In Escherichia coli (strain K12), this protein is FKBP-type peptidyl-prolyl cis-trans isomerase FkpA (fkpA).